The following is a 252-amino-acid chain: Isoprenyl transferase 2 (252 aa).

D26 is a catalytic residue. D26 serves as a coordination point for Mg(2+). Substrate is bound by residues 27-30 (GNGR), W31, R39, H43, and 71-73 (SSE). N74 (proton acceptor) is an active-site residue. Residues W75, R77, R194, and 200-202 (RLS) contribute to the substrate site. E213 contacts Mg(2+).

Belongs to the UPP synthase family. As to quaternary structure, homodimer. Mg(2+) serves as cofactor.

Functionally, catalyzes the condensation of isopentenyl diphosphate (IPP) with allylic pyrophosphates generating different type of terpenoids. This is Isoprenyl transferase 2 from Bradyrhizobium diazoefficiens (strain JCM 10833 / BCRC 13528 / IAM 13628 / NBRC 14792 / USDA 110).